The sequence spans 225 residues: Gene 30 protein (225 aa).

The segment at 48 to 73 (RNSELGHPEVKKEETTQQPEKGEGMA) is disordered. Basic and acidic residues predominate over residues 51–73 (ELGHPEVKKEETTQQPEKGEGMA).

Essential for DNA synthesis. The chain is Gene 30 protein (30) from Bacillus phage SP01 (Bacteriophage SP01).